Consider the following 312-residue polypeptide: Aspartoacylase (312 aa).

Zn(2+) is bound by residues His20 and Glu23. 3 residues coordinate N-acetyl-L-aspartate: Arg62, Asn69, and Arg70. Residue His115 participates in Zn(2+) binding. Positions 163 and 167 each coordinate N-acetyl-L-aspartate. Glu177 acts as the Proton donor/acceptor in catalysis. Tyr287 contributes to the N-acetyl-L-aspartate binding site.

This sequence belongs to the AspA/AstE family. Aspartoacylase subfamily. In terms of assembly, homodimer. The cofactor is Zn(2+). Detected in kidney proximal tubule cells (at protein level).

It is found in the cytoplasm. The protein resides in the nucleus. It catalyses the reaction an N-acyl-L-aspartate + H2O = a carboxylate + L-aspartate. The enzyme catalyses N-acetyl-L-aspartate + H2O = L-aspartate + acetate. In terms of biological role, catalyzes the deacetylation of N-acetylaspartic acid (NAA) to produce acetate and L-aspartate. NAA occurs in high concentration in brain and its hydrolysis NAA plays a significant part in the maintenance of intact white matter. In other tissues it acts as a scavenger of NAA from body fluids. This is Aspartoacylase from Rattus norvegicus (Rat).